The following is a 285-amino-acid chain: Chalcone synthase 6-4 (285 aa).

The active site involves Cys60.

Belongs to the thiolase-like superfamily. Chalcone/stilbene synthases family.

The catalysed reaction is (E)-4-coumaroyl-CoA + 3 malonyl-CoA + 3 H(+) = 2',4,4',6'-tetrahydroxychalcone + 3 CO2 + 4 CoA. Its pathway is secondary metabolite biosynthesis; flavonoid biosynthesis. Its function is as follows. The primary product of this enzyme is 4,2',4',6'-tetrahydroxychalcone (also termed naringenin-chalcone or chalcone) which can under specific conditions spontaneously isomerize into naringenin. The chain is Chalcone synthase 6-4 (CHS6-4) from Medicago sativa (Alfalfa).